Reading from the N-terminus, the 294-residue chain is Bifunctional protein FolD (294 aa).

Residues 166–168 (GRS), serine 191, and isoleucine 232 contribute to the NADP(+) site.

The protein belongs to the tetrahydrofolate dehydrogenase/cyclohydrolase family. Homodimer.

The catalysed reaction is (6R)-5,10-methylene-5,6,7,8-tetrahydrofolate + NADP(+) = (6R)-5,10-methenyltetrahydrofolate + NADPH. It carries out the reaction (6R)-5,10-methenyltetrahydrofolate + H2O = (6R)-10-formyltetrahydrofolate + H(+). It participates in one-carbon metabolism; tetrahydrofolate interconversion. In terms of biological role, catalyzes the oxidation of 5,10-methylenetetrahydrofolate to 5,10-methenyltetrahydrofolate and then the hydrolysis of 5,10-methenyltetrahydrofolate to 10-formyltetrahydrofolate. In Bradyrhizobium sp. (strain ORS 278), this protein is Bifunctional protein FolD.